The following is a 126-amino-acid chain: Small ribosomal subunit protein uS12 (126 aa).

The segment at 1 to 28 (MPTINQLVRKGRRKVRTKSKSPALDGNP) is disordered. Residues 9 to 19 (RKGRRKVRTKS) are compositionally biased toward basic residues. Aspartate 89 is subject to 3-methylthioaspartic acid. A disordered region spans residues 106–126 (GVEKRRRSRSKYGVKRPKAAK). The span at 109–126 (KRRRSRSKYGVKRPKAAK) shows a compositional bias: basic residues.

It belongs to the universal ribosomal protein uS12 family. Part of the 30S ribosomal subunit. Contacts proteins S8 and S17. May interact with IF1 in the 30S initiation complex.

Functionally, with S4 and S5 plays an important role in translational accuracy. In terms of biological role, interacts with and stabilizes bases of the 16S rRNA that are involved in tRNA selection in the A site and with the mRNA backbone. Located at the interface of the 30S and 50S subunits, it traverses the body of the 30S subunit contacting proteins on the other side and probably holding the rRNA structure together. The combined cluster of proteins S8, S12 and S17 appears to hold together the shoulder and platform of the 30S subunit. The sequence is that of Small ribosomal subunit protein uS12 from Opitutus terrae (strain DSM 11246 / JCM 15787 / PB90-1).